The following is a 452-amino-acid chain: tRNA modification GTPase MnmE (452 aa).

Residues Arg28, Glu85, and Lys124 each coordinate (6S)-5-formyl-5,6,7,8-tetrahydrofolate. A TrmE-type G domain is found at 220 to 378; sequence GMNVVLVGRP…LRTELLRAAG (159 aa). Asn230 lines the K(+) pocket. GTP is bound by residues 230–235, 249–255, 274–277, and 359–361; these read NVGKSS, TDVAGTT, DTAG, and SAR. Residue Ser234 coordinates Mg(2+). The K(+) site is built by Thr249, Val251, and Thr254. Thr255 lines the Mg(2+) pocket. Lys452 provides a ligand contact to (6S)-5-formyl-5,6,7,8-tetrahydrofolate.

Belongs to the TRAFAC class TrmE-Era-EngA-EngB-Septin-like GTPase superfamily. TrmE GTPase family. Homodimer. Heterotetramer of two MnmE and two MnmG subunits. It depends on K(+) as a cofactor.

Its subcellular location is the cytoplasm. In terms of biological role, exhibits a very high intrinsic GTPase hydrolysis rate. Involved in the addition of a carboxymethylaminomethyl (cmnm) group at the wobble position (U34) of certain tRNAs, forming tRNA-cmnm(5)s(2)U34. The protein is tRNA modification GTPase MnmE of Azoarcus sp. (strain BH72).